The chain runs to 92 residues: Small ribosomal subunit protein uS19 (92 aa).

The protein belongs to the universal ribosomal protein uS19 family.

Protein S19 forms a complex with S13 that binds strongly to the 16S ribosomal RNA. This is Small ribosomal subunit protein uS19 from Streptococcus thermophilus (strain ATCC BAA-491 / LMD-9).